A 351-amino-acid polypeptide reads, in one-letter code: Alanine racemase (351 aa).

The Proton acceptor; specific for D-alanine role is filled by K34. Residue K34 is modified to N6-(pyridoxal phosphate)lysine. R126 contacts substrate. Y248 serves as the catalytic Proton acceptor; specific for L-alanine. Substrate is bound at residue M296.

This sequence belongs to the alanine racemase family. Requires pyridoxal 5'-phosphate as cofactor.

It carries out the reaction L-alanine = D-alanine. It functions in the pathway amino-acid biosynthesis; D-alanine biosynthesis; D-alanine from L-alanine: step 1/1. Functionally, catalyzes the interconversion of L-alanine and D-alanine. May also act on other amino acids. In Deinococcus radiodurans (strain ATCC 13939 / DSM 20539 / JCM 16871 / CCUG 27074 / LMG 4051 / NBRC 15346 / NCIMB 9279 / VKM B-1422 / R1), this protein is Alanine racemase (alr).